Consider the following 116-residue polypeptide: Large ribosomal subunit protein uL24 (116 aa).

Residues 1–21 are disordered; the sequence is MATNNGAGKARHKFHVKKGDT.

The protein belongs to the universal ribosomal protein uL24 family. As to quaternary structure, part of the 50S ribosomal subunit.

In terms of biological role, one of two assembly initiator proteins, it binds directly to the 5'-end of the 23S rRNA, where it nucleates assembly of the 50S subunit. Its function is as follows. One of the proteins that surrounds the polypeptide exit tunnel on the outside of the subunit. This chain is Large ribosomal subunit protein uL24, found in Gloeobacter violaceus (strain ATCC 29082 / PCC 7421).